The primary structure comprises 314 residues: DNA-directed RNA polymerase subunit alpha (314 aa).

Residues 1 to 228 are alpha N-terminal domain (alpha-NTD); sequence MIEFEKPNIH…EHLGLFMDIS (228 aa). The alpha C-terminal domain (alpha-CTD) stretch occupies residues 242 to 314; that stretch reads PVAASASDSA…DMNLGFRKED (73 aa).

This sequence belongs to the RNA polymerase alpha chain family. Homodimer. The RNAP catalytic core consists of 2 alpha, 1 beta, 1 beta' and 1 omega subunit. When a sigma factor is associated with the core the holoenzyme is formed, which can initiate transcription.

The enzyme catalyses RNA(n) + a ribonucleoside 5'-triphosphate = RNA(n+1) + diphosphate. Functionally, DNA-dependent RNA polymerase catalyzes the transcription of DNA into RNA using the four ribonucleoside triphosphates as substrates. This is DNA-directed RNA polymerase subunit alpha from Leuconostoc mesenteroides subsp. mesenteroides (strain ATCC 8293 / DSM 20343 / BCRC 11652 / CCM 1803 / JCM 6124 / NCDO 523 / NBRC 100496 / NCIMB 8023 / NCTC 12954 / NRRL B-1118 / 37Y).